Consider the following 167-residue polypeptide: Ribosome maturation factor RimM (167 aa).

Positions Asp92–Gln166 constitute a PRC barrel domain.

This sequence belongs to the RimM family. Binds ribosomal protein uS19.

The protein resides in the cytoplasm. In terms of biological role, an accessory protein needed during the final step in the assembly of 30S ribosomal subunit, possibly for assembly of the head region. Essential for efficient processing of 16S rRNA. May be needed both before and after RbfA during the maturation of 16S rRNA. It has affinity for free ribosomal 30S subunits but not for 70S ribosomes. The sequence is that of Ribosome maturation factor RimM from Paracoccus denitrificans (strain Pd 1222).